Consider the following 288-residue polypeptide: Serine/threonine-protein acetyltransferase YopJ (288 aa).

Catalysis depends on residues His-109 and Glu-128. Residue His-109 coordinates CoA. Residue 167-168 coordinates CoA; it reads RS. Residue Cys-172 is part of the active site. 1D-myo-inositol hexakisphosphate-binding positions include 182–185 and 224–225; these read KLYI and KH. A CoA-binding site is contributed by 227–230; that stretch reads QGKK. Residue Arg-257 coordinates 1D-myo-inositol hexakisphosphate. 266-270 lines the CoA pocket; sequence DGKEL.

Belongs to the acetyltransferase YopJ family. The cofactor is 1D-myo-inositol hexakisphosphate.

It localises to the secreted. It catalyses the reaction L-threonyl-[protein] + acetyl-CoA = O-acetyl-L-threonyl-[protein] + CoA. It carries out the reaction L-seryl-[protein] + acetyl-CoA = O-acetyl-L-seryl-[protein] + CoA. 1D-myo-inositol hexakisphosphate activates protein-acetyltransferase activity via an allosteric mechanism: 1D-myo-inositol hexakisphosphate-binding induces a conformational rearrangement that stimulates the interaction with acetyl-CoA. In terms of biological role, serine/threonine-protein acetyltransferase translocated into infected cells, which inhibits the host immune response and induces cell death by mediating acetylation of target proteins. Inhibits the MAPK and NF-kappa-B signaling pathways by acetylating protein-kinases such as MAP2K1, MAP2K6, MAP3K7/TAK1 and I-kappa-B kinase (CHUK/IKKA and IKBKB) on serine and threonine residues critical for their activation by phosphorylation, thereby preventing protein-kinase activation. Promotes pyroptosis, a programmed cell death, in host cells by mediating acetylation of MAP3K7/TAK1: MAP3K7/TAK1 inactivation triggers activation of caspase-8 (CASP8), followed by CASP8-dependent cleavage of gasdermin-D (GSDMD) and induction of pyroptosis. Also able to induce intestinal barrier dysfunction by acetylating and inhibiting host protein-kinases RIPK2/RICK and MAP3K7/TAK1, thereby promoting cell death. The sequence is that of Serine/threonine-protein acetyltransferase YopJ from Yersinia pseudotuberculosis serotype I (strain IP32953).